The following is a 1043-amino-acid chain: Unconventional myosin-Ia (1043 aa).

The Myosin motor domain maps to 8–694 (VGVEDLVLLE…TLFYLEEQRR (687 aa)). 101 to 108 (GESGAGKT) lines the ATP pocket. Residues 571–593 (VTTLMKNLYSKNPNYIRCIKPNE) are actin-binding. IQ domains are found at residues 697-719 (LQQL…HYQL), 720-742 (MRKS…HYRK), and 743-772 (MKAS…SGAA). The region spanning 858 to 1042 (KASYPQSVPI…KGSRCLEVTV (185 aa)) is the TH1 domain.

The protein belongs to the TRAFAC class myosin-kinesin ATPase superfamily. Myosin family. In terms of processing, phosphorylated by ALPK1.

Involved in directing the movement of organelles along actin filaments. The sequence is that of Unconventional myosin-Ia (MYO1A) from Bos taurus (Bovine).